The primary structure comprises 638 residues: Probable inactive receptor kinase At4g23740 (638 aa).

A signal peptide spans 1-24 (MEALRIYLWSLCLSLCLIIYGANS). 5 LRR repeats span residues 94-117 (ALRVLSLRSNLISGEFPKDFVELK), 118-139 (DLAFLYLQDNNLSGPLPLDFSV), 142-165 (NLTSVNLSNNGFNGTIPSSLSRLK), 166-188 (RIQSLNLANNTLSGDIPDLSVLS), and 189-198 (SLQHIDLSNN). Residues 257–277 (VFLLIVIAVSIVVITALAFVL) traverse the membrane as a helical segment. In terms of domain architecture, Protein kinase spans 337–608 (RASAEVLGKG…SDLVRLIENV (272 aa)). Residue S339 is modified to Phosphoserine. 343 to 351 (LGKGTFGTT) lines the ATP pocket. At T360 the chain carries Phosphothreonine. K365 contributes to the ATP binding site. 2 positions are modified to phosphoserine: S416 and S419. Phosphothreonine occurs at positions 436 and 509. S513 bears the Phosphoserine mark. Positions 612 to 638 (RTSIEPEPELKPKSENGASETSTPSEI) are disordered. Positions 613–625 (TSIEPEPELKPKS) are enriched in basic and acidic residues. Residues 627–638 (NGASETSTPSEI) show a composition bias toward polar residues.

It belongs to the protein kinase superfamily.

The protein resides in the membrane. The sequence is that of Probable inactive receptor kinase At4g23740 from Arabidopsis thaliana (Mouse-ear cress).